Here is a 261-residue protein sequence, read N- to C-terminus: Carnitinyl-CoA dehydratase (261 aa).

The active-site Nucleophile is the Glu111. The active-site Proton acceptor is the Glu131.

This sequence belongs to the enoyl-CoA hydratase/isomerase family.

It catalyses the reaction (R)-carnitinyl-CoA = crotonobetainyl-CoA + H2O. It functions in the pathway amine and polyamine metabolism; carnitine metabolism. Its function is as follows. Catalyzes the reversible dehydration of L-carnitinyl-CoA to crotonobetainyl-CoA. This is Carnitinyl-CoA dehydratase from Shigella flexneri.